The chain runs to 237 residues: Orotidine 5'-phosphate decarboxylase (237 aa).

Residues Asp17, Lys39, 66–75, Thr121, Arg182, Gln191, Gly211, and Arg212 each bind substrate; that span reads DLKLHDIGNT. Lys68 functions as the Proton donor in the catalytic mechanism.

The protein belongs to the OMP decarboxylase family. Type 1 subfamily. As to quaternary structure, homodimer.

The catalysed reaction is orotidine 5'-phosphate + H(+) = UMP + CO2. The protein operates within pyrimidine metabolism; UMP biosynthesis via de novo pathway; UMP from orotate: step 2/2. Functionally, catalyzes the decarboxylation of orotidine 5'-monophosphate (OMP) to uridine 5'-monophosphate (UMP). In Bradyrhizobium diazoefficiens (strain JCM 10833 / BCRC 13528 / IAM 13628 / NBRC 14792 / USDA 110), this protein is Orotidine 5'-phosphate decarboxylase.